The following is a 132-amino-acid chain: ATP synthase epsilon chain (132 aa).

Belongs to the ATPase epsilon chain family. As to quaternary structure, F-type ATPases have 2 components, CF(1) - the catalytic core - and CF(0) - the membrane proton channel. CF(1) has five subunits: alpha(3), beta(3), gamma(1), delta(1), epsilon(1). CF(0) has three main subunits: a, b and c.

Its subcellular location is the cell inner membrane. Its function is as follows. Produces ATP from ADP in the presence of a proton gradient across the membrane. This is ATP synthase epsilon chain from Anaeromyxobacter sp. (strain K).